The primary structure comprises 164 residues: Protein eva-1 homolog B (164 aa).

Residues 29-49 traverse the membrane as a helical segment; sequence GLYFVLGVCFGLLLTLCLLVI. Residues 56–110 are disordered; it reads RSRPRTPAPRRDPRSSTLEPEDEDDEEDEDTMTRLGPDDTLQGQELSTEPDGPLS. Over residues 74–85 the composition is skewed to acidic residues; that stretch reads EPEDEDDEEDED. A phosphothreonine mark is found at Thr-86, Thr-149, and Thr-157.

It belongs to the EVA1 family.

The protein localises to the membrane. The chain is Protein eva-1 homolog B (Eva1b) from Mus musculus (Mouse).